A 151-amino-acid chain; its full sequence is Large ribosomal subunit protein uL13 (151 aa).

This sequence belongs to the universal ribosomal protein uL13 family. In terms of assembly, part of the 50S ribosomal subunit.

Functionally, this protein is one of the early assembly proteins of the 50S ribosomal subunit, although it is not seen to bind rRNA by itself. It is important during the early stages of 50S assembly. In Synechococcus elongatus (strain ATCC 33912 / PCC 7942 / FACHB-805) (Anacystis nidulans R2), this protein is Large ribosomal subunit protein uL13.